A 305-amino-acid polypeptide reads, in one-letter code: Pseudouridine-5'-phosphate glycosidase (305 aa).

Glu-30 functions as the Proton donor in the catalytic mechanism. Substrate-binding residues include Lys-91 and Val-111. Asp-143 provides a ligand contact to Mn(2+). Residue 145–147 (SAD) coordinates substrate. Lys-164 acts as the Nucleophile in catalysis.

Belongs to the pseudouridine-5'-phosphate glycosidase family. As to quaternary structure, homotrimer. It depends on Mn(2+) as a cofactor.

The enzyme catalyses D-ribose 5-phosphate + uracil = psi-UMP + H2O. In terms of biological role, catalyzes the reversible cleavage of pseudouridine 5'-phosphate (PsiMP) to ribose 5-phosphate and uracil. Functions biologically in the cleavage direction, as part of a pseudouridine degradation pathway. The protein is Pseudouridine-5'-phosphate glycosidase of Mesorhizobium japonicum (strain LMG 29417 / CECT 9101 / MAFF 303099) (Mesorhizobium loti (strain MAFF 303099)).